The primary structure comprises 235 residues: Orotidine 5'-phosphate decarboxylase (235 aa).

Residues Asp-17, Lys-39, 66–75 (DMKLLDIDHT), Thr-121, Arg-182, Gln-191, and Arg-212 each bind substrate. Lys-68 serves as the catalytic Proton donor.

This sequence belongs to the OMP decarboxylase family. Type 1 subfamily. In terms of assembly, homodimer.

The catalysed reaction is orotidine 5'-phosphate + H(+) = UMP + CO2. The protein operates within pyrimidine metabolism; UMP biosynthesis via de novo pathway; UMP from orotate: step 2/2. Catalyzes the decarboxylation of orotidine 5'-monophosphate (OMP) to uridine 5'-monophosphate (UMP). The chain is Orotidine 5'-phosphate decarboxylase from Bartonella bacilliformis.